The sequence spans 438 residues: DNA primase DnaG (438 aa).

Positions 169 to 243 constitute a Toprim domain; it reads DSIIVVEGRA…DIDYVARAPY (75 aa). Glutamate 175, aspartate 217, and aspartate 219 together coordinate Mg(2+).

The protein belongs to the archaeal DnaG primase family. As to quaternary structure, forms a ternary complex with MCM helicase and DNA. It depends on Mg(2+) as a cofactor.

It carries out the reaction ssDNA + n NTP = ssDNA/pppN(pN)n-1 hybrid + (n-1) diphosphate.. RNA polymerase that catalyzes the synthesis of short RNA molecules used as primers for DNA polymerase during DNA replication. This chain is DNA primase DnaG, found in Methanococcus maripaludis (strain C6 / ATCC BAA-1332).